The following is a 207-amino-acid chain: HTH-type transcriptional regulator AqdR (207 aa).

The HTH tetR-type domain occupies 16–76 (ARFRERVLDA…DALLTRTQAE (61 aa)). Residues 39–58 (GFADVARKAGVNGVSLYRRW) constitute a DNA-binding region (H-T-H motif).

Functionally, may regulate the expression of genes involved in the degradation of the Pseudomonas aeruginosa quorum sensing signal molecules HHQ (2-heptyl-4-quinolone) and PQS (2-heptyl-3-hydroxy-4-quinolone). This chain is HTH-type transcriptional regulator AqdR, found in Rhodococcus erythropolis (Arthrobacter picolinophilus).